The chain runs to 305 residues: Homoserine O-acetyltransferase (305 aa).

The Acyl-thioester intermediate role is filled by Cys-142. Substrate is bound by residues Lys-163 and Ser-192. The Proton acceptor role is filled by His-235. Glu-237 is a catalytic residue. Residue Arg-249 participates in substrate binding.

It belongs to the MetA family.

It is found in the cytoplasm. The enzyme catalyses L-homoserine + acetyl-CoA = O-acetyl-L-homoserine + CoA. It functions in the pathway amino-acid biosynthesis; L-methionine biosynthesis via de novo pathway; O-acetyl-L-homoserine from L-homoserine: step 1/1. Its function is as follows. Transfers an acetyl group from acetyl-CoA to L-homoserine, forming acetyl-L-homoserine. The polypeptide is Homoserine O-acetyltransferase (Bacteroides fragilis (strain YCH46)).